Consider the following 430-residue polypeptide: KICSTOR complex protein kaptin (430 aa).

The interval 410-430 (RKHQQGLGDRVGPRPVEHPAS) is disordered. Residues 420-430 (VGPRPVEHPAS) show a composition bias toward basic and acidic residues.

Part of the KICSTOR complex composed of KPTN, ITFG2, KICS2 and SZT2. SZT2 probably serves as a link between the other three proteins in the KICSTOR complex and mediates the direct interaction with the GATOR1 complex. May associate with F-actin filaments.

It is found in the lysosome membrane. Its subcellular location is the cell projection. The protein localises to the lamellipodium. The protein resides in the stereocilium. Functionally, as part of the KICSTOR complex functions in the amino acid-sensing branch of the TORC1 signaling pathway. Recruits, in an amino acid-independent manner, the GATOR1 complex to the lysosomal membranes and allows its interaction with GATOR2 and the RAG GTPases. Functions upstream of the RAG GTPases and is required to negatively regulate mTORC1 signaling in absence of amino acids. In absence of the KICSTOR complex mTORC1 is constitutively localized to the lysosome and activated. The KICSTOR complex is also probably involved in the regulation of mTORC1 by glucose. This is KICSTOR complex protein kaptin from Mus musculus (Mouse).